Reading from the N-terminus, the 207-residue chain is Succinyl-CoA:3-ketoacid coenzyme A transferase subunit B (207 aa).

Residue glutamate 43 is part of the active site.

The protein belongs to the 3-oxoacid CoA-transferase subunit B family. In terms of assembly, heterodimer of a subunit A and a subunit B.

The catalysed reaction is a 3-oxo acid + succinyl-CoA = a 3-oxoacyl-CoA + succinate. This is Succinyl-CoA:3-ketoacid coenzyme A transferase subunit B (scoB) from Helicobacter pylori (strain ATCC 700392 / 26695) (Campylobacter pylori).